We begin with the raw amino-acid sequence, 206 residues long: Ribonuclease HII (206 aa).

Positions 18–206 (LRIAGVDEVG…PVHNILYQEK (189 aa)) constitute an RNase H type-2 domain. Residues Asp-24, Glu-25, and Asp-115 each coordinate a divalent metal cation.

The protein belongs to the RNase HII family. Mn(2+) serves as cofactor. Mg(2+) is required as a cofactor.

Its subcellular location is the cytoplasm. The enzyme catalyses Endonucleolytic cleavage to 5'-phosphomonoester.. Endonuclease that specifically degrades the RNA of RNA-DNA hybrids. This is Ribonuclease HII from Dinoroseobacter shibae (strain DSM 16493 / NCIMB 14021 / DFL 12).